The chain runs to 147 residues: Signal peptidase complex subunit 3 (147 aa).

The Cytoplasmic segment spans residues 1–6; that stretch reads MHSWVQ. The chain crosses the membrane as a helical; Signal-anchor for type II membrane protein span at residues 7 to 29; that stretch reads RLLTTATTAALLLLAACCAASAL. Topologically, residues 30-147 are lumenal; sequence DAFHVPSVQA…EFNLPDSYTS (118 aa).

This sequence belongs to the SPCS3 family. Component of the signal peptidase complex (SPC) composed of a catalytic subunit SEC11 and three accessory subunits SPCS1, SPCS2 and SPCS3. The complex induces a local thinning of the ER membrane which is used to measure the length of the signal peptide (SP) h-region of protein substrates. This ensures the selectivity of the complex towards h-regions shorter than 18-20 amino acids.

It is found in the endoplasmic reticulum membrane. Essential component of the signal peptidase complex (SPC) which catalyzes the cleavage of N-terminal signal sequences from nascent proteins as they are translocated into the lumen of the endoplasmic reticulum. Essential for the SPC catalytic activity, possibly by stabilizing and positioning the active center of the complex close to the lumenal surface. In Oryza sativa subsp. japonica (Rice), this protein is Signal peptidase complex subunit 3.